We begin with the raw amino-acid sequence, 775 residues long: Chitin synthase 6 (775 aa).

6 helical membrane-spanning segments follow: residues 19–39 (VLLM…YCLV), 54–74 (CIIV…IMVV), 94–114 (LQWF…LFCI), 441–461 (FMQN…LAIM), 470–490 (LPVG…LYFG), and 498–518 (IWLY…YMVY). The span at 532–541 (RADAAAADSH) shows a compositional bias: low complexity. Disordered stretches follow at residues 532–603 (RADA…DGKF) and 702–775 (PSAF…KTSR). Residues 542–556 (TTAREAAEQAEKQGD) show a composition bias toward basic and acidic residues. Residues 577–586 (NRESTTTSEL) show a composition bias toward polar residues. The segment covering 702 to 713 (PSAFPHAHSASA) has biased composition (low complexity). Asn-724 carries N-linked (GlcNAc...) asparagine glycosylation. Over residues 732–741 (RSEDIQRFSE) the composition is skewed to basic and acidic residues. Polar residues predominate over residues 754 to 763 (SRNVGNSSFA). An N-linked (GlcNAc...) asparagine glycan is attached at Asn-759. The segment covering 766–775 (MAKRTPKTSR) has biased composition (basic residues).

Belongs to the chitin synthase family. Class VII subfamily.

The protein resides in the cell membrane. The enzyme catalyses [(1-&gt;4)-N-acetyl-beta-D-glucosaminyl](n) + UDP-N-acetyl-alpha-D-glucosamine = [(1-&gt;4)-N-acetyl-beta-D-glucosaminyl](n+1) + UDP + H(+). Functionally, polymerizes chitin, a structural polymer of the cell wall and septum, by transferring the sugar moiety of UDP-GlcNAc to the non-reducing end of the growing chitin polymer. Shows additive effects in septum formation with CHS1, CHS2, CHS3A, CHS4, CHS5 and CHS7. Involved in virulence and mediates mycotoxin deoxinivalenol (DON) biosynthesis via the regulation of the expression of TRI4, TRI5 and TRI6. The protein is Chitin synthase 6 of Gibberella zeae (strain ATCC MYA-4620 / CBS 123657 / FGSC 9075 / NRRL 31084 / PH-1) (Wheat head blight fungus).